The following is a 336-amino-acid chain: MGSISRYLLKKAADGLKDEQRLKIEMSDSKSVPECFHFNRERRMPIAEINGEDGFFMFPSQQSLENFENTKKYSNELSPDAIGIPLFQIINCTLPFGKRGHSNTVVGNVPYYKIFKFILRTADEPPPYTVAKIVCSNNGLILYKVPLYDIYKNVSQANVTYSFVGTTSTEPNLLAMAHREGHRDLDTKVNNLNLRWHVTYSPVVTNDHYKLILLADYEVNRLDEDVIRAAKNKMSIDQKDQKVQRFVAAHYTREFETSLFRWVAQEGHLILGEYSTDQGSFGLNNIPPLTEELGCQSLLIHYIEYMKRQRKKIAKEARRQNKRNVANTTNMNMNLM.

Its subcellular location is the cytoplasm. Its function is as follows. Involved in regulation of invasive growth. The sequence is that of Protein DIA1 (DIA1) from Saccharomyces cerevisiae (strain ATCC 204508 / S288c) (Baker's yeast).